A 1202-amino-acid polypeptide reads, in one-letter code: DNA-directed RNA polymerase subunit beta (1202 aa).

This sequence belongs to the RNA polymerase beta chain family. As to quaternary structure, the RNAP catalytic core consists of 2 alpha, 1 beta, 1 beta' and 1 omega subunit. When a sigma factor is associated with the core the holoenzyme is formed, which can initiate transcription.

It catalyses the reaction RNA(n) + a ribonucleoside 5'-triphosphate = RNA(n+1) + diphosphate. Functionally, DNA-dependent RNA polymerase catalyzes the transcription of DNA into RNA using the four ribonucleoside triphosphates as substrates. The polypeptide is DNA-directed RNA polymerase subunit beta (Mycoplasmopsis synoviae (strain 53) (Mycoplasma synoviae)).